Consider the following 728-residue polypeptide: Pre-mRNA-splicing ATP-dependent RNA helicase prp-28 (728 aa).

A disordered region spans residues 19 to 155 (KKEEEAAAAK…NDEAELRARY (137 aa)). 3 stretches are compositionally biased toward basic and acidic residues: residues 33 to 59 (PKKERERLEAEKKAKEEEERKRKEEAK), 109 to 125 (RDYRDNRDNRDNRDRNQ), and 137 to 153 (EEKRAKMERNDEAELRA). The short motif at 293–321 (RSWEESTLPRRLLDIVKNVGYDEPTPIQR) is the Q motif element. In terms of domain architecture, Helicase ATP-binding spans 324 to 527 (IPIALQARDL…KKYLRRPAIV (204 aa)). ATP is bound at residue 337–344 (AVTGSGKT). The DEAD box signature appears at 450-453 (DEAD). Residues 538–701 (TVEQRVEFVS…KVPDELRRHE (164 aa)) enclose the Helicase C-terminal domain. The disordered stretch occupies residues 692-728 (KVPDELRRHEAAQNKPQKGQKKLEESNGYSGKGGSWN). Basic and acidic residues predominate over residues 693-703 (VPDELRRHEAA).

Belongs to the DEAD box helicase family. DDX23/PRP28 subfamily. Component of the U5 snRNP complex.

The protein resides in the cytoplasm. It is found in the nucleus. The enzyme catalyses ATP + H2O = ADP + phosphate + H(+). In terms of biological role, ATP-dependent RNA helicase involved in mRNA splicing. May destabilize the U1/5'-splice site duplex to permit an effective competition for the 5'-splice site by the U6 snRNA, resulting in the switch between U1 and U6 at the 5'-splice site. May also act to unwind the U4/U6 base-pairing interaction in the U4/U6/U5 snRNP, facilitating the first covalent step of splicing. This is Pre-mRNA-splicing ATP-dependent RNA helicase prp-28 (prp-28) from Neurospora crassa (strain ATCC 24698 / 74-OR23-1A / CBS 708.71 / DSM 1257 / FGSC 987).